The chain runs to 235 residues: Myelin protein zero-like protein 3 (235 aa).

Positions 1-31 are cleaved as a signal peptide; the sequence is MQQRGAAGSRGCALFPLLGVLFFQGVYIVFS. Positions 32–148 constitute an Ig-like V-type domain; it reads LEIRADAHVR…NIPMTELTVT (117 aa). Residues 32–158 are Extracellular-facing; the sequence is LEIRADAHVR…ERGFGTMLSS (127 aa). An intrachain disulfide couples Cys52 to Cys128. Asn123 carries N-linked (GlcNAc...) asparagine glycosylation. A helical membrane pass occupies residues 159-179; that stretch reads VALLSILVFVPSAVVVALLLV. Topologically, residues 180 to 235 are cytoplasmic; it reads RMGRKAAGLKKRSRSGYKKSSIEVSDDTDQEEEEACMARLCVRCAECLDSDYEETY.

It belongs to the myelin P0 protein family.

It is found in the membrane. Functionally, mediates homophilic cell-cell adhesion. In Homo sapiens (Human), this protein is Myelin protein zero-like protein 3 (MPZL3).